The following is a 157-amino-acid chain: Catabolic 3-dehydroquinase (157 aa).

Residue Y27 is the Proton acceptor of the active site. N80, H86, and D93 together coordinate substrate. Catalysis depends on H106, which acts as the Proton donor. Substrate contacts are provided by residues 107-108 (VS) and R117.

This sequence belongs to the type-II 3-dehydroquinase family. In terms of assembly, homododecamer. Adopts a ring-like structure, composed of an arrangement of two hexameric rings stacked on top of one another.

The enzyme catalyses 3-dehydroquinate = 3-dehydroshikimate + H2O. Its pathway is aromatic compound metabolism; 3,4-dihydroxybenzoate biosynthesis; 3,4-dihydroxybenzoate from 3-dehydroquinate: step 1/2. Its function is as follows. Is involved in the catabolism of quinate. Allows the utilization of quinate as carbon source via the beta-ketoadipate pathway. This chain is Catabolic 3-dehydroquinase, found in Pyricularia oryzae (strain 70-15 / ATCC MYA-4617 / FGSC 8958) (Rice blast fungus).